Here is a 177-residue protein sequence, read N- to C-terminus: Nuclear export protein (177 aa).

2 consecutive short sequence motifs (nuclear export signal) follow at residues 91 to 100 and 117 to 127; these read LWLPMKSLSL and MKHQILTRLKL.

In terms of assembly, binds M1 protein. May interact with human nucleoporins and exportin XPO1/CRM1.

Its subcellular location is the virion. It localises to the host nucleus. Functionally, mediates the nuclear export of encapsidated genomic RNAs (ribonucleoproteins, RNPs). Acts as an adapter between viral RNPs complexes and the nuclear export machinery of the cell. Possesses no intrinsic RNA-binding activity, but includes a C-terminal M1-binding domain. This domain is believed to allow recognition of RNPs to which the M1 protein is bound. Because the M1 protein is not available in large quantities until the later stages of infection, such an indirect recognition mechanism probably ensures that genomic RNPs are not exported from the nucleus before sufficient quantities of viral mRNA and progeny genomic RNA have been synthesized. Furthermore, the RNPs enters the cytoplasm only when they have associated with the M1 protein that is necessary to guide them to the plasma membrane. May down-regulate viral RNA synthesis when overproduced. This is Nuclear export protein (NS) from Homo sapiens (Human).